Reading from the N-terminus, the 220-residue chain is Transcriptional regulatory protein SpaR (220 aa).

The region spanning 3-115 (KILAVDDEKD…ELSARVNAHL (113 aa)) is the Response regulatory domain. Asp51 is subject to 4-aspartylphosphate. The segment at residues 124 to 220 (QSKRVISGFL…TVWGVGYKWE (97 aa)) is a DNA-binding region (ompR/PhoB-type).

Post-translationally, phosphorylated by SpaK.

Its subcellular location is the cytoplasm. Its function is as follows. Member of the two-component regulatory system SpaK/SpaR involved in the regulation of the biosynthesis of lantibiotic subtilin. SpaR may function as a regulatory protein. This Bacillus subtilis protein is Transcriptional regulatory protein SpaR (spaR).